A 494-amino-acid chain; its full sequence is BUB3-interacting and GLEBS motif-containing protein ZNF207 (494 aa).

Positions 1–92 (MGRKKKKQLK…EGIPEKDMDE (92 aa)) are microtubule-binding region. 2 consecutive C2H2-type zinc fingers follow at residues 11–34 (PWCW…KAKH) and 35–58 (FKCH…MQVH). Basic and acidic residues predominate over residues 100–111 (KTQESQKKKQQD). Disordered stretches follow at residues 100-161 (KTQE…PGIP), 250-377 (NRPP…SATS), and 455-494 (LPGA…GGRY). A compositionally biased stretch (acidic residues) spans 112-121 (DSDEYDDDDS). The segment covering 127–136 (FQPQPVQPQQ) has biased composition (polar residues). The segment covering 142 to 161 (MAQPGLPPVPGAPGMPPGIP) has biased composition (pro residues). Residues 283-300 (SSSTASSNSESLSASSKA) show a composition bias toward low complexity. Positions 323–332 (LNSTPATSTE) are enriched in polar residues. The span at 342–377 (TQSTASTTSTTNSTAAKPAASITSKPATLTTTSATS) shows a compositional bias: low complexity. The interval 375 to 407 (ATSKLIHPDEDISLEERRAQLPKYQRNLPRPGQ) is GLEBS. Positions 463-483 (GQGPPMVPPYQGGPPRPPMGM) are enriched in pro residues.

In terms of assembly, interacts (via GLEBS region) with BUB3.

The protein resides in the nucleus. The protein localises to the chromosome. It is found in the centromere. It localises to the kinetochore. Its subcellular location is the cytoplasm. The protein resides in the cytoskeleton. The protein localises to the spindle. Kinetochore- and microtubule-binding protein that plays a key role in spindle assembly. ZNF207/BuGZ is mainly composed of disordered low-complexity regions and undergoes phase transition or coacervation to form temperature-dependent liquid droplets. Coacervation promotes microtubule bundling and concentrates tubulin, promoting microtubule polymerization and assembly of spindle and spindle matrix by concentrating its building blocks. Also acts as a regulator of mitotic chromosome alignment by mediating the stability and kinetochore loading of BUB3. Mechanisms by which BUB3 is protected are unclear: according to a first report, ZNF207/BuGZ may act by blocking ubiquitination and proteasomal degradation of BUB3. According to another report, the stabilization is independent of the proteasome. The polypeptide is BUB3-interacting and GLEBS motif-containing protein ZNF207 (Pongo abelii (Sumatran orangutan)).